Here is a 371-residue protein sequence, read N- to C-terminus: Chaperone protein DnaJ (371 aa).

A J domain is found at 5–69 (DYYEVLGLSK…QKRAQYDQFG (65 aa)). The CR-type zinc-finger motif lies at 133-215 (GKELNVEIPV…CHGSGKVRKR (83 aa)). Residues Cys146, Cys149, Cys163, Cys166, Cys189, Cys192, Cys203, and Cys206 each coordinate Zn(2+). 4 CXXCXGXG motif repeats span residues 146 to 153 (CDTCKGSG), 163 to 170 (CKHCSGSG), 189 to 196 (CSHCSGTG), and 203 to 210 (CTTCHGSG).

Belongs to the DnaJ family. Homodimer. The cofactor is Zn(2+).

The protein resides in the cytoplasm. Participates actively in the response to hyperosmotic and heat shock by preventing the aggregation of stress-denatured proteins and by disaggregating proteins, also in an autonomous, DnaK-independent fashion. Unfolded proteins bind initially to DnaJ; upon interaction with the DnaJ-bound protein, DnaK hydrolyzes its bound ATP, resulting in the formation of a stable complex. GrpE releases ADP from DnaK; ATP binding to DnaK triggers the release of the substrate protein, thus completing the reaction cycle. Several rounds of ATP-dependent interactions between DnaJ, DnaK and GrpE are required for fully efficient folding. Also involved, together with DnaK and GrpE, in the DNA replication of plasmids through activation of initiation proteins. This Bacillus cereus (strain 03BB102) protein is Chaperone protein DnaJ.